We begin with the raw amino-acid sequence, 530 residues long: Trigger factor (530 aa).

The region spanning 162-243 (DDLVTIDLAG…VTKVCEQELP (82 aa)) is the PPIase FKBP-type domain. Residues 432–530 (NALELDRIQP…KTAAKDDKSK (99 aa)) are disordered. Composition is skewed to basic and acidic residues over residues 459–478 (SAEK…EKAP) and 501–512 (KVVDAKSDDKPA).

Belongs to the FKBP-type PPIase family. Tig subfamily.

Its subcellular location is the cytoplasm. It catalyses the reaction [protein]-peptidylproline (omega=180) = [protein]-peptidylproline (omega=0). In terms of biological role, involved in protein export. Acts as a chaperone by maintaining the newly synthesized protein in an open conformation. Functions as a peptidyl-prolyl cis-trans isomerase. The chain is Trigger factor from Cutibacterium acnes (strain DSM 16379 / KPA171202) (Propionibacterium acnes).